The following is a 114-amino-acid chain: Iron-sulfur cluster assembly protein CyaY (114 aa).

It belongs to the frataxin family.

Functionally, involved in iron-sulfur (Fe-S) cluster assembly. May act as a regulator of Fe-S biogenesis. In Ralstonia pickettii (strain 12J), this protein is Iron-sulfur cluster assembly protein CyaY.